A 446-amino-acid polypeptide reads, in one-letter code: F-box/LRR-repeat protein At4g29420 (446 aa).

Residues 1–51 (MDELPPELWIKILSRINDSESLARCRVASKTLNSLSREVRAVNLICTWSRY) form the F-box domain. LRR repeat units follow at residues 59–84 (VVTP…SVGV), 103–130 (DLYL…SISD), 135–160 (SCWR…EVKN), 181–206 (FIRL…NLIG), 223–248 (CHWT…KLKC), 265–289 (HLSV…ELVS), 318–343 (QSER…SLSP), and 382–407 (NVHQ…RLMI).

The protein is F-box/LRR-repeat protein At4g29420 of Arabidopsis thaliana (Mouse-ear cress).